Reading from the N-terminus, the 446-residue chain is Eukaryotic translation initiation factor 2 subunit gamma (446 aa).

The tr-type G domain maps to 21-227 (QATINIGTIG…YIVKKIPIPV (207 aa)). A G1 region spans residues 30–37 (GHVAHGKS). 33-38 (AHGKST) is a binding site for GTP. The tract at residues 58-62 (NITIK) is G2. Positions 114-117 (DCPG) are G3. GTP is bound by residues 170–173 (NKVD) and 205–207 (SAQ). A G4 region spans residues 170–173 (NKVD). The interval 205–207 (SAQ) is G5. Residues 436 to 446 (AKVVEGKTLKV) are interacts with cdc123.

It belongs to the TRAFAC class translation factor GTPase superfamily. Classic translation factor GTPase family. EIF2G subfamily. Eukaryotic translation initiation factor 2 eIF2 is a heterotrimeric complex composed of an alpha, a beta and a gamma subunit. The factors eIF-1, eIF-2, eIF-3, TIF5/eIF-5 and methionyl-tRNAi form a multifactor complex (MFC) that may bind to the 40S ribosome. Interacts with cdc123; the interaction is direct.

It localises to the cytoplasm. It is found in the cytosol. It catalyses the reaction GTP + H2O = GDP + phosphate + H(+). Functionally, as a subunit of eukaryotic initiation factor 2 eIF2, involved in the early steps of protein synthesis. In the presence of GTP, eIF-2 forms a ternary complex with initiator tRNA Met-tRNAi and then recruits the 40S ribosomal complex and initiation factors eIF-1, eIF-1A and eIF-3 to form the 43S pre-initiation complex (43S PIC), a step that determines the rate of protein translation. The 43S PIC binds to mRNA and scans downstream to the initiation codon, where it forms a 48S initiation complex by codon-anticodon base pairing. This leads to the displacement of eIF-1 to allow GTPase-activating protein (GAP) eIF-5-mediated hydrolysis of eIF2-bound GTP. Hydrolysis of GTP and release of Pi, which makes GTP hydrolysis irreversible, causes the release of the eIF-2-GDP binary complex from the 40S subunit, an event that is essential for the subsequent joining of the 60S ribosomal subunit to form an elongation-competent 80S ribosome. In order for eIF-2 to recycle and catalyze another round of initiation, the GDP bound to eIF-2 must be exchanged with GTP by way of a reaction catalyzed by GDP-GTP exchange factor (GEF) eIF-2B. This chain is Eukaryotic translation initiation factor 2 subunit gamma (tif213), found in Schizosaccharomyces pombe (strain 972 / ATCC 24843) (Fission yeast).